A 472-amino-acid polypeptide reads, in one-letter code: Estrogen receptor beta (472 aa).

Residues 1 to 104 (MAFCSPAMMN…NPGSKRDAHF (104 aa)) form a modulating region. 2 NR C4-type zinc fingers span residues 105 to 125 (CAVC…CEGC) and 141 to 165 (CPAT…LRKC). The nuclear receptor DNA-binding region spans 105–170 (CAVCSDYASG…RLRKCYEVGM (66 aa)). The NR LBD domain maps to 217–449 (SPEQFVLTLL…DLLLEMLNAH (233 aa)).

Belongs to the nuclear hormone receptor family. NR3 subfamily. Binds DNA as a homodimer. Can form a heterodimer with ER-alpha. In terms of tissue distribution, a high expression is seen in the telencephalon, diencephalon, pituitary, testis and kidneys but little or no expression is seen in the cerebellum, pectoral muscle and adrenal gland.

It localises to the nucleus. Binds estrogens with an affinity similar to that of ER-alpha, and activates expression of reporter genes containing estrogen response elements (ERE) in an estrogen-dependent manner. This chain is Estrogen receptor beta (ESR2), found in Coturnix japonica (Japanese quail).